The following is a 198-amino-acid chain: Na(+)-translocating NADH-quinone reductase subunit E (198 aa).

Transmembrane regions (helical) follow at residues 11 to 31, 39 to 59, 77 to 97, 110 to 130, 140 to 160, and 176 to 196; these read SIFI…FLAV, FGLG…NNLV, FLSF…LEMI, GIFL…SFMV, VVYG…LAGI, and LGIT…FSGV.

The protein belongs to the NqrDE/RnfAE family. Composed of six subunits; NqrA, NqrB, NqrC, NqrD, NqrE and NqrF.

The protein localises to the cell inner membrane. It catalyses the reaction a ubiquinone + n Na(+)(in) + NADH + H(+) = a ubiquinol + n Na(+)(out) + NAD(+). NQR complex catalyzes the reduction of ubiquinone-1 to ubiquinol by two successive reactions, coupled with the transport of Na(+) ions from the cytoplasm to the periplasm. NqrA to NqrE are probably involved in the second step, the conversion of ubisemiquinone to ubiquinol. The chain is Na(+)-translocating NADH-quinone reductase subunit E from Aliivibrio fischeri (strain ATCC 700601 / ES114) (Vibrio fischeri).